The sequence spans 164 residues: Ubiquitin-fold modifier-conjugating enzyme 1 (164 aa).

The active-site Glycyl thioester intermediate is the C116.

Belongs to the ubiquitin-conjugating enzyme family. UFC1 subfamily.

Its function is as follows. E2-like enzyme which forms an intermediate with UFM1 via a thioester linkage. The chain is Ubiquitin-fold modifier-conjugating enzyme 1 from Drosophila willistoni (Fruit fly).